Consider the following 570-residue polypeptide: Urease subunit alpha (570 aa).

The region spanning 132–570 (GGIDTHVHFI…LPMAQRYFLF (439 aa)) is the Urease domain. H137 and H139 together coordinate Ni(2+). Substrate contacts are provided by H139 and A170. K220 serves as a coordination point for Ni(2+). An N6-carboxylysine modification is found at K220. Positions 222 and 249 each coordinate substrate. Residues H249 and H275 each contribute to the Ni(2+) site. H323 acts as the Proton donor in catalysis. D363 lines the Ni(2+) pocket. Residue A366 participates in substrate binding.

It belongs to the metallo-dependent hydrolases superfamily. Urease alpha subunit family. As to quaternary structure, heterotrimer of UreA (gamma), UreB (beta) and UreC (alpha) subunits. Three heterotrimers associate to form the active enzyme. Ni cation serves as cofactor. Carboxylation allows a single lysine to coordinate two nickel ions.

It localises to the cytoplasm. It catalyses the reaction urea + 2 H2O + H(+) = hydrogencarbonate + 2 NH4(+). It functions in the pathway nitrogen metabolism; urea degradation; CO(2) and NH(3) from urea (urease route): step 1/1. With respect to regulation, inhibited by fluoride. In Sporosarcina pasteurii (Bacillus pasteurii), this protein is Urease subunit alpha.